The following is a 145-amino-acid chain: Large ribosomal subunit protein uL11 (145 aa).

It belongs to the universal ribosomal protein uL11 family. In terms of assembly, part of the ribosomal stalk of the 50S ribosomal subunit. Interacts with L10 and the large rRNA to form the base of the stalk. L10 forms an elongated spine to which L12 dimers bind in a sequential fashion forming a multimeric L10(L12)X complex. In terms of processing, one or more lysine residues are methylated.

Its function is as follows. Forms part of the ribosomal stalk which helps the ribosome interact with GTP-bound translation factors. The polypeptide is Large ribosomal subunit protein uL11 (Rickettsia typhi (strain ATCC VR-144 / Wilmington)).